Reading from the N-terminus, the 522-residue chain is Protein RCC2 (522 aa).

The disordered stretch occupies residues 1 to 83 (MPRKKAAAAA…TAGKAGGAAV (83 aa)). S16 carries the post-translational modification Phosphoserine. Position 20 is a phosphothreonine (T20). Positions 24–36 (GPRKRGGPAGRKR) are enriched in basic residues. 6 positions are modified to phosphoserine: S43, S44, S45, S46, S50, and S51. Residues 71–82 (RPATAGKAGGAA) show a composition bias toward low complexity. N6-acetyllysine occurs at positions 92 and 124. RCC1 repeat units lie at residues 103 to 165 (KGQL…SLLI), 168 to 219 (EGKL…ALTE), 221 to 271 (GSVF…IMDC), 273 to 347 (GNLY…VLDS), 348 to 401 (QKRV…AVSE), 403 to 447 (GGLF…VAAD), and 448 to 501 (ESTI…VIAR). N6-acetyllysine is present on K293. Residues 318-325 (KTKDGQIL) form a required for interaction with RAC1 region. T342 carries the phosphothreonine modification. Residue K377 is modified to N6-acetyllysine. Residues 502–515 (DESETEKEKIKKLP) show a composition bias toward basic and acidic residues. The interval 502–522 (DESETEKEKIKKLPEYNPRTL) is disordered.

In terms of assembly, interacts with RAC1. Interacts with nucleotide-free and with GDP and GTP-bound forms of RAC1, with a slight preference for GDP-bound RAC1. Binds preferentially to the nucleotide-free form of RAC1. Interacts with CORO1C. Interacts with microtubules.

It localises to the nucleus. Its subcellular location is the nucleolus. It is found in the cytoplasm. The protein resides in the cytoskeleton. The protein localises to the chromosome. It localises to the centromere. Its subcellular location is the spindle. It is found in the midbody. The protein resides in the cell membrane. Multifunctional protein that may affect its functions by regulating the activity of small GTPases, such as RAC1 and RALA. Required for normal progress through the cell cycle, both during interphase and during mitosis. Required for the presence of normal levels of MAD2L1, AURKB and BIRC5 on inner centromeres during mitosis, and for normal attachment of kinetochores to mitotic spindles. Required for normal organization of the microtubule cytoskeleton in interphase cells. Functions as guanine nucleotide exchange factor (GEF) for RALA. Interferes with the activation of RAC1 by guanine nucleotide exchange factors. Prevents accumulation of active, GTP-bound RAC1, and suppresses RAC1-mediated reorganization of the actin cytoskeleton and formation of membrane protrusions. Required for normal cellular responses to contacts with the extracellular matrix of adjacent cells, and for directional cell migration in response to a fibronectin gradient (in vitro). This chain is Protein RCC2 (RCC2), found in Homo sapiens (Human).